A 241-amino-acid chain; its full sequence is Probable 2-phosphosulfolactate phosphatase (241 aa).

Belongs to the ComB family. Mg(2+) serves as cofactor.

The catalysed reaction is (2R)-O-phospho-3-sulfolactate + H2O = (2R)-3-sulfolactate + phosphate. This is Probable 2-phosphosulfolactate phosphatase from Microcystis aeruginosa (strain NIES-843 / IAM M-2473).